Consider the following 1588-residue polypeptide: Pentafunctional AROM polypeptide (1588 aa).

The segment at 1–392 (MVQLAKVPIL…YGDSAQFVSD (392 aa)) is 3-dehydroquinate synthase. Residues 43–45 (DTN), 78–81 (ETSK), 109–111 (GGV), and D114 each bind NAD(+). R125 lines the 7-phospho-2-dehydro-3-deoxy-D-arabino-heptonate pocket. An NAD(+)-binding site is contributed by 134 to 135 (TS). Residues D141 and K147 each coordinate 7-phospho-2-dehydro-3-deoxy-D-arabino-heptonate. K156 lines the NAD(+) pocket. N157 provides a ligand contact to 7-phospho-2-dehydro-3-deoxy-D-arabino-heptonate. Residues 174–177 (WLET) and N185 each bind NAD(+). E189 is a Zn(2+) binding site. Residues 189–192 (EVIK) and K258 contribute to the 7-phospho-2-dehydro-3-deoxy-D-arabino-heptonate site. The active-site Proton acceptor; for 3-dehydroquinate synthase activity is the E268. Residues 272–276 (RNLLN) and H279 contribute to the 7-phospho-2-dehydro-3-deoxy-D-arabino-heptonate site. H279 contributes to the Zn(2+) binding site. Catalysis depends on H283, which acts as the Proton acceptor; for 3-dehydroquinate synthase activity. Positions 295 and 364 each coordinate 7-phospho-2-dehydro-3-deoxy-D-arabino-heptonate. Position 295 (H295) interacts with Zn(2+). The tract at residues 405–871 (VYPFKDIPAD…WDVLHSELGA (467 aa)) is EPSP synthase. The active-site For EPSP synthase activity is C853. The tract at residues 890 to 1080 (SVVIIGMRAA…IPSGRSAFVC (191 aa)) is shikimate kinase. An ATP-binding site is contributed by 895–902 (GMRAAGKT). The tract at residues 1081–1293 (LTFDDLTEQT…AAPGQLTVAQ (213 aa)) is 3-dehydroquinase. H1198 acts as the Proton acceptor; for 3-dehydroquinate dehydratase activity in catalysis. K1227 functions as the Schiff-base intermediate with substrate; for 3-dehydroquinate dehydratase activity in the catalytic mechanism. The interval 1306–1588 (PKELFVVGKP…KAIFDAVTKE (283 aa)) is shikimate dehydrogenase.

This sequence in the N-terminal section; belongs to the sugar phosphate cyclases superfamily. Dehydroquinate synthase family. It in the 2nd section; belongs to the EPSP synthase family. In the 3rd section; belongs to the shikimate kinase family. The protein in the 4th section; belongs to the type-I 3-dehydroquinase family. This sequence in the C-terminal section; belongs to the shikimate dehydrogenase family. Homodimer. Zn(2+) serves as cofactor.

It localises to the cytoplasm. The enzyme catalyses 7-phospho-2-dehydro-3-deoxy-D-arabino-heptonate = 3-dehydroquinate + phosphate. It carries out the reaction 3-dehydroquinate = 3-dehydroshikimate + H2O. The catalysed reaction is shikimate + NADP(+) = 3-dehydroshikimate + NADPH + H(+). It catalyses the reaction shikimate + ATP = 3-phosphoshikimate + ADP + H(+). The enzyme catalyses 3-phosphoshikimate + phosphoenolpyruvate = 5-O-(1-carboxyvinyl)-3-phosphoshikimate + phosphate. It functions in the pathway metabolic intermediate biosynthesis; chorismate biosynthesis; chorismate from D-erythrose 4-phosphate and phosphoenolpyruvate: step 2/7. It participates in metabolic intermediate biosynthesis; chorismate biosynthesis; chorismate from D-erythrose 4-phosphate and phosphoenolpyruvate: step 3/7. The protein operates within metabolic intermediate biosynthesis; chorismate biosynthesis; chorismate from D-erythrose 4-phosphate and phosphoenolpyruvate: step 4/7. Its pathway is metabolic intermediate biosynthesis; chorismate biosynthesis; chorismate from D-erythrose 4-phosphate and phosphoenolpyruvate: step 5/7. It functions in the pathway metabolic intermediate biosynthesis; chorismate biosynthesis; chorismate from D-erythrose 4-phosphate and phosphoenolpyruvate: step 6/7. In terms of biological role, the AROM polypeptide catalyzes 5 consecutive enzymatic reactions in prechorismate polyaromatic amino acid biosynthesis. This Saccharomyces cerevisiae (strain ATCC 204508 / S288c) (Baker's yeast) protein is Pentafunctional AROM polypeptide.